We begin with the raw amino-acid sequence, 1813 residues long: U3 small nucleolar RNA-associated protein 10 (1813 aa).

HEAT repeat units follow at residues 245-283 (DVLI…KASL), 389-427 (SETI…LQFN), 428-464 (ESDT…DIMP), 584-621 (ADMQ…LASK), and 659-695 (IIHH…QDDS). Disordered stretches follow at residues 686-705 (IRGP…STGV) and 887-912 (DLGS…SSMD). Residues 690–705 (RSQDDSDRTRSESTGV) are compositionally biased toward basic and acidic residues. HEAT repeat units lie at residues 1058–1095 (QTID…AFEH), 1189–1228 (KIAV…KAHG), 1265–1302 (LSLV…SSND), 1309–1347 (ARVL…KYGK), 1398–1437 (EALP…HVPW), 1678–1715 (LASI…LAVA), and 1769–1806 (ALLP…ILGE).

This sequence belongs to the HEATR1/UTP10 family. In terms of assembly, component of the ribosomal small subunit (SSU) processome.

The protein localises to the nucleus. It is found in the nucleolus. Functionally, involved in nucleolar processing of pre-18S ribosomal RNA. Involved in ribosome biosynthesis. This is U3 small nucleolar RNA-associated protein 10 from Coccidioides immitis (strain RS) (Valley fever fungus).